A 500-amino-acid chain; its full sequence is Glycerol kinase (500 aa).

T12 serves as a coordination point for ADP. T12, T13, and S14 together coordinate ATP. Residue T12 coordinates sn-glycerol 3-phosphate. R16 serves as a coordination point for ADP. 4 residues coordinate sn-glycerol 3-phosphate: R82, E83, Y135, and D245. Glycerol is bound by residues R82, E83, Y135, D245, and Q246. ADP is bound by residues T267 and G310. ATP-binding residues include T267, G310, Q314, and G411. Residues G411 and N415 each contribute to the ADP site.

This sequence belongs to the FGGY kinase family. In terms of assembly, homotetramer and homodimer (in equilibrium).

It catalyses the reaction glycerol + ATP = sn-glycerol 3-phosphate + ADP + H(+). It functions in the pathway polyol metabolism; glycerol degradation via glycerol kinase pathway; sn-glycerol 3-phosphate from glycerol: step 1/1. Its activity is regulated as follows. Activated by phosphorylation and inhibited by fructose 1,6-bisphosphate (FBP). Key enzyme in the regulation of glycerol uptake and metabolism. Catalyzes the phosphorylation of glycerol to yield sn-glycerol 3-phosphate. The chain is Glycerol kinase from Clostridium perfringens (strain ATCC 13124 / DSM 756 / JCM 1290 / NCIMB 6125 / NCTC 8237 / Type A).